The sequence spans 419 residues: Mitogen-activated protein kinase spm1 (419 aa).

Residues 23 to 314 enclose the Protein kinase domain; sequence YTVTKELGQG…VEEALEHPYL (292 aa). ATP-binding positions include 29–37 and K52; that span reads LGQGAYGIV. D149 (proton acceptor) is an active-site residue.

It belongs to the protein kinase superfamily. Ser/Thr protein kinase family. MAP kinase subfamily. It depends on Mg(2+) as a cofactor. Post-translationally, phosphorylated by the MAP kinase kinase mkk1.

The enzyme catalyses L-seryl-[protein] + ATP = O-phospho-L-seryl-[protein] + ADP + H(+). The catalysed reaction is L-threonyl-[protein] + ATP = O-phospho-L-threonyl-[protein] + ADP + H(+). Its function is as follows. Mitogen-activated protein kinase, part of the mkh1-mkk1-spm1 MAPK cascade that regulates vegetative growth, conidial formation, colony surface hydrophobicity, osmotic stress, cell wall integrity maintenance, carbon and nitrogen source utilization, chitin distribution, septa formation, and pathogenicity. This chain is Mitogen-activated protein kinase spm1, found in Cytospora mali (Apple Valsa canker fungus).